The sequence spans 1681 residues: Sodium channel protein type 7 subunit alpha (1681 aa).

The Cytoplasmic portion of the chain corresponds to 1–118 (MLTSPEPKGL…RRAAIKALVH (118 aa)). The I repeat unit spans residues 101 to 402 (TLSPLNSLRR…ILTMTYEKEK (302 aa)). The helical transmembrane segment at 119–138 (PLFRLLILISVLTDSILMCM) threads the bilayer. The Extracellular portion of the chain corresponds to 139 to 142 (SNLP). A helical transmembrane segment spans residues 143–168 (EWILAIENTLLGIYAFEILVKVIARG). Residues 169–179 (IWAGSFSFLGD) are Cytoplasmic-facing. Residues 180–197 (LWNWLDFSVTLFELITRF) traverse the membrane as a helical segment. The Extracellular portion of the chain corresponds to 198-201 (SPLS). A helical transmembrane segment spans residues 202-220 (SFLMLKTIRTFRILKIIPL). Residues 221-238 (NHGLQSIVMTLAQCLKKL) are Cytoplasmic-facing. A helical transmembrane segment spans residues 239 to 260 (FGAIALALFFLAVFSLLGMGLF). The Extracellular segment spans residues 261-339 (MGNLKHKCLR…PDNGFTSFDN (79 aa)). Cysteines 268 and 308 form a disulfide. 4 N-linked (GlcNAc...) asparagine glycosylation sites follow: N277, N282, N288, and N310. The pore-forming intramembrane region spans 340–367 (FGWSLLAMFRLMTQDYPELLYHQILYAS). G368 is a topological domain (extracellular). The chain crosses the membrane as a helical span at residues 369–408 (KVYMIFFVMISFWFAFYLTSLFLGILTMTYEKEKQRACEE). Residues 409–506 (SGGLDPKCQQ…EFADRVITHP (98 aa)) are Cytoplasmic-facing. Residues 488 to 757 (CSPCWVKLNE…QLAMARIKSG (270 aa)) form an II repeat. Residues 507 to 522 (LADLFLVICIVLNICF) form a helical membrane-spanning segment. Topologically, residues 523–531 (LALEHFPMS) are extracellular. Residues 532 to 560 (EELRSLLHVGNLVFIGIYTIEMILKIIAM) form a helical membrane-spanning segment. The Cytoplasmic portion of the chain corresponds to 561–569 (HPYGYFQIS). A helical transmembrane segment spans residues 570–587 (WNIFDSILVVLELTEILL). Topologically, residues 588 to 593 (ADVEGL) are extracellular. A helical membrane pass occupies residues 594-609 (AVLITVPLIFIKLGKY). At 610–626 (GPPFKSLMRILGSSLMA) the chain is on the cytoplasmic side. The chain crosses the membrane as a helical span at residues 627 to 655 (LKDLVLLLCIFVYFSAVFGMKLFGRSYKD). At 656–673 (CVCHIKEDCQPQRWHMSD) the chain is on the extracellular side. Cystine bridges form between C658–C664 and C696–C705. The pore-forming intramembrane region spans 674–700 (FLHAYMTVFRILCGEWIETLWECMEVA). A topological domain (extracellular) is located at residue G701. The helical transmembrane segment at 702 to 732 (QAWCIPFYMMVILIGNLLILYLFVTLVSSFS) threads the bilayer. At 733-934 (YYDATSEVNK…KTCCKIVENS (202 aa)) the chain is on the cytoplasmic side. Over residues 806-834 (YKDQSSSTEKTPVTESESQSLIASPSASE) the composition is skewed to polar residues. Residues 806–875 (YKDQSSSTEK…MKQSSSSECS (70 aa)) are disordered. The residue at position 843 (S843) is a Phosphoserine. Residues 916 to 1224 (NGKIWKNIRK…KKQYRALKKL (309 aa)) form an III repeat. The chain crosses the membrane as a helical span at residues 935–953 (WFECFIGLVTLLCTGTLAL). Topologically, residues 954 to 961 (EDIYIDQR) are extracellular. The chain crosses the membrane as a helical span at residues 962–990 (KTTKILLEYADMIFAYIFILEMLLKWVAY). The Cytoplasmic segment spans residues 991–998 (GFKAFFSN). The chain crosses the membrane as a helical span at residues 999–1020 (NWYKLDFMVVIVFCLSLIGKTR). A topological domain (extracellular) is located at residue E1021. The chain crosses the membrane as a helical span at residues 1022–1040 (DLNPLTSIKFLRALRVLSQ). Residues 1041-1055 (FERMKVVLRALIKTT) are Cytoplasmic-facing. Residues 1056–1080 (LPTVSVFLVCLMIWLLFSVIGVQLF) form a helical membrane-spanning segment. Over 1081–1127 (AGKFYECIDPTKGERFPVFEVMNKSQCEKLLFNESMPWENAKLNFDN) the chain is Extracellular. The cysteines at positions 1087 and 1107 are disulfide-linked. N-linked (GlcNAc...) asparagine glycans are attached at residues N1103 and N1113. The pore-forming intramembrane region spans 1128-1154 (VGNGFLSLLQVATFNGWISIMNSAIDS). The Extracellular segment spans residues 1155–1167 (VGVNMQPSFEYNL). Residues 1168 to 1202 (YMYSYFIIFVIFGLFLPLCMLIGVIIRNFNKQKIK) traverse the membrane as a helical segment. At 1203–1250 (QGGSNIFITVKQKKQYRALKKLLYADVQKPTPRPRNKFQGFLFDLVTH) the chain is on the cytoplasmic side. One copy of the IV repeat lies at 1233–1531 (TPRPRNKFQG…WNRFDPDRTQ (299 aa)). The helical transmembrane segment at 1251–1272 (RVFNVIIILLICFQATTIMIQK) threads the bilayer. At 1273 to 1276 (DEQS) the chain is on the extracellular side. The chain crosses the membrane as a helical span at residues 1277 to 1305 (PQMETAIFWMNSIFVMLFTLECILKLTAF). The Cytoplasmic segment spans residues 1306–1312 (RCHYFTS). Residues 1313 to 1338 (AWNVHDFMVVIFSITGLLLPLTIGQY) form a helical membrane-spanning segment. At 1339–1341 (FVP) the chain is on the extracellular side. A helical transmembrane segment spans residues 1342 to 1362 (PSLVQLILLSRVIHILRPGKG). The Cytoplasmic segment spans residues 1363-1377 (PKVFHDLMLPLILAL). A helical membrane pass occupies residues 1378 to 1402 (PALLNISLLIFLVMFIYAIFGMYNF). The Extracellular segment spans residues 1403–1420 (AYVKKEAGINDVSNFETF). An intramembrane region (pore-forming) is located at residues 1421–1444 (GSSMLCLFQVTTFSGWDGMLDAIF). The Extracellular portion of the chain corresponds to 1445–1468 (NSQWSDCDPDKINPGTQVKGDCGS). C1451 and C1466 are disulfide-bonded. A helical membrane pass occupies residues 1469 to 1504 (PSVGISYFVSYILISWLIIVNMYIVLIMEFLSIPSQ). Over 1505–1681 (KKSRTLSEDD…EEKASIQTQI (177 aa)) the chain is Cytoplasmic. Over residues 1647–1662 (NVSDTPAIDDRRDDLT) the composition is skewed to basic and acidic residues. The segment at 1647-1681 (NVSDTPAIDDRRDDLTSKGAHSGKIEEKASIQTQI) is disordered.

Belongs to the sodium channel (TC 1.A.1.10) family. SCN7A subfamily. As to quaternary structure, the sodium channel formed by SCN7A is probably a heterooligomeric complex consisting of the ion conducting pore forming alpha subunit SCN7A and regulatory beta subunits such as SCN3B. Interacts with ATP1A1; activates ATP1A1 and thereby indirectly signals to nearby neurons to regulate sodium homeostasis. Not tissue specific but widely expressed. Expressed in regions of the central nervous system that control body fluid ionic balance.

It is found in the cell membrane. It carries out the reaction Na(+)(in) = Na(+)(out). Its function is as follows. Sodium leak channel functioning as an osmosensor regulating sodium ion levels in various tissues and organs. While most sodium channels are voltage-gated, SCN7A is not and lets sodium flow through membrane along its concentration gradient. In glial cells of the central nervous system, senses body-fluid sodium levels and controls salt intake behavior as well as voluntary water intake through activation of nearby neurons to maintain appropriate sodium levels in the body. By mediating sodium influx into keratinocytes, also plays a role in skin barrier homeostasis. This Mus musculus (Mouse) protein is Sodium channel protein type 7 subunit alpha.